An 84-amino-acid chain; its full sequence is Esculentin-1SIa (84 aa).

A signal peptide spans 1–22 (MFTLKKPLLLIVLLGIISLSLC). The propeptide at 23–36 (EQERAADEDEGSEI) is removed in mature form. An intrachain disulfide couples cysteine 78 to cysteine 84.

Expressed by the skin glands.

It is found in the secreted. Its function is as follows. Has antimicrobial activity against Gram-negative bacterium E.coli ATCC 8739 (MIC=6.3 ug), against Gram positive bacteria S.aureus ATCC 6538 (MIC=3.1 ug), methicillin-resistant S.aureus ATCC 43300 (MIC=25 ug) and B.subtilis ATCC 6633 (MIC=25 ug). Has no activity against fungus C.albicans ATCC 90028. This is Esculentin-1SIa from Odorrana ishikawae (Ishikawa's frog).